The sequence spans 159 residues: Putative 2'-deoxynucleoside 5'-phosphate N-hydrolase 1 (159 aa).

Residues 25 to 31 (FLSGSIR), tyrosine 40, histidine 58, glutamate 104, and 126 to 128 (SAM) each bind substrate.

Belongs to the 2'-deoxynucleoside 5'-phosphate N-hydrolase 1 family. Monomer and homodimer.

It catalyses the reaction a pyrimidine 2'-deoxyribonucleoside 5'-phosphate + H2O = a pyrimidine nucleobase + 2-deoxy-D-ribose 5-phosphate. It carries out the reaction a purine 2'-deoxyribonucleoside 5'-phosphate + H2O = a purine nucleobase + 2-deoxy-D-ribose 5-phosphate. In terms of biological role, catalyzes the cleavage of the N-glycosidic bond of deoxyribonucleoside 5'-monophosphates to yield deoxyribose 5-phosphate and a purine or pyrimidine base. The protein is Putative 2'-deoxynucleoside 5'-phosphate N-hydrolase 1 of Methanosarcina barkeri (strain Fusaro / DSM 804).